The chain runs to 223 residues: GTP cyclohydrolase 1 (223 aa).

Residues C111, H114, and C182 each coordinate Zn(2+).

This sequence belongs to the GTP cyclohydrolase I family. Homomer.

The enzyme catalyses GTP + H2O = 7,8-dihydroneopterin 3'-triphosphate + formate + H(+). The protein operates within cofactor biosynthesis; 7,8-dihydroneopterin triphosphate biosynthesis; 7,8-dihydroneopterin triphosphate from GTP: step 1/1. The sequence is that of GTP cyclohydrolase 1 from Flavobacterium johnsoniae (strain ATCC 17061 / DSM 2064 / JCM 8514 / BCRC 14874 / CCUG 350202 / NBRC 14942 / NCIMB 11054 / UW101) (Cytophaga johnsonae).